A 230-amino-acid chain; its full sequence is Poxin (230 aa).

Catalysis depends on H43, which acts as the Proton donor. The active-site Shared with catalytic histidine of dimeric partner is Y174. The active-site Proton acceptor; shared with catalytic histidine of dimeric partner is the K178.

This sequence belongs to the poxin family. In terms of assembly, homodimer.

The catalysed reaction is 2',3'-cGAMP + H2O = Gp(2'-5')Ap(3') + H(+). Its function is as follows. Nuclease that cleaves host 2',3'-cGAMP. In Orgyia pseudotsugata multicapsid polyhedrosis virus (OpMNPV), this protein is Poxin (P26).